Reading from the N-terminus, the 437-residue chain is Elongation factor 1-gamma (437 aa).

Ala2 bears the N-acetylalanine mark. In terms of domain architecture, GST N-terminal spans 2-87 (AAGTLYTYPE…YVSNEELRGS (86 aa)). The 129-residue stretch at 88–216 (TPEAAAQVVQ…VKLCEKMAQF (129 aa)) folds into the GST C-terminal domain. Lys147 and Lys212 each carry N6-acetyllysine. A compositionally biased stretch (basic and acidic residues) spans 221 to 254 (FAESQPKKDTPRKEKGSREEKQKPQAERKEEKKA). Residues 221–268 (FAESQPKKDTPRKEKGSREEKQKPQAERKEEKKAAAPAPEEEMDECEQ) are disordered. Residue Lys253 forms a Glycyl lysine isopeptide (Lys-Gly) (interchain with G-Cter in SUMO1) linkage. The EF-1-gamma C-terminal domain maps to 276 to 437 (AKDPFAHLPK…KAVNQGKIFK (162 aa)). Lys285 participates in a covalent cross-link: Glycyl lysine isopeptide (Lys-Gly) (interchain with G-Cter in SUMO2). Lys401 bears the N6-acetyllysine mark. Lys434 bears the N6-acetyllysine; alternate mark. N6-malonyllysine; alternate is present on Lys434.

EF-1 is composed of four subunits: alpha, beta, delta, and gamma.

In terms of biological role, probably plays a role in anchoring the complex to other cellular components. This Mus musculus (Mouse) protein is Elongation factor 1-gamma (Eef1g).